The following is a 281-amino-acid chain: 4-diphosphocytidyl-2-C-methyl-D-erythritol kinase (281 aa).

Residue Lys-15 is part of the active site. 98–108 (PTGAGLGGGSS) serves as a coordination point for ATP. Residue Asp-140 is part of the active site.

It belongs to the GHMP kinase family. IspE subfamily.

The catalysed reaction is 4-CDP-2-C-methyl-D-erythritol + ATP = 4-CDP-2-C-methyl-D-erythritol 2-phosphate + ADP + H(+). The protein operates within isoprenoid biosynthesis; isopentenyl diphosphate biosynthesis via DXP pathway; isopentenyl diphosphate from 1-deoxy-D-xylulose 5-phosphate: step 3/6. Catalyzes the phosphorylation of the position 2 hydroxy group of 4-diphosphocytidyl-2C-methyl-D-erythritol. This is 4-diphosphocytidyl-2-C-methyl-D-erythritol kinase from Neisseria gonorrhoeae (strain NCCP11945).